A 40-amino-acid polypeptide reads, in one-letter code: Conotoxin Bt14.16 (40 aa).

Positions 1–18 (SDGRDAAVIYTESDVIAR) are excised as a propeptide. 2 disulfides stabilise this stretch: Cys21–Cys36 and Cys24–Cys29.

This sequence belongs to the conotoxin A superfamily. Expressed by the venom duct.

The protein resides in the secreted. Functionally, probable neurotoxin with unknown target. Possibly targets ion channels. This is Conotoxin Bt14.16 from Conus betulinus (Beech cone).